The following is a 728-amino-acid chain: Phomopsene synthase (728 aa).

Residues 1–327 (MEYRYSYVID…PRYHSDQSLD (327 aa)) form a terpene cyclase region. Mg(2+)-binding residues include Asp94 and Asp98. Residues Asp94, Asp98, 181 to 184 (RIVD), Asn226, 230 to 234 (SWEKE), and 319 to 320 (RY) each bind substrate. Residues 94–98 (DDLVD) carry the DDXXD 1 motif. Residues 226–234 (NDVQSWEKE) carry the NSE/DTE motif. Residues 328-728 (EMMVARMKYG…FRFLLSLLKV (401 aa)) form a prenyltransferase region. Over residues 352-363 (ENRGTKRTHQDD) the composition is skewed to basic and acidic residues. Positions 352-379 (ENRGTKRTHQDDTEGVQSVKRFNGASTK) are disordered. A run of 3 repeats spans residues 381–386 (GINGTN), 387–392 (GINGLN), and 393–398 (GINGSN). A 3 X 6 AA approximate tandem repeats region spans residues 381–398 (GINGTNGINGLNGINGSN). Lys447, Arg450, and His479 together coordinate isopentenyl diphosphate. The Mg(2+) site is built by Asp486 and Asp490. The DDXXD 2 signature appears at 486–490 (DDVQD). Arg495 is a dimethylallyl diphosphate binding site. An isopentenyl diphosphate-binding site is contributed by Arg496. Dimethylallyl diphosphate is bound by residues Lys574, Thr575, Gln610, Asn617, Lys627, and Lys637.

In the N-terminal section; belongs to the terpene synthase family. The protein in the C-terminal section; belongs to the FPP/GGPP synthase family. Hexamer. Mg(2+) serves as cofactor.

The enzyme catalyses isopentenyl diphosphate + (2E,6E)-farnesyl diphosphate = (2E,6E,10E)-geranylgeranyl diphosphate + diphosphate. It functions in the pathway secondary metabolite biosynthesis; terpenoid biosynthesis. In terms of biological role, bifunctional terpene synthase; part of the gene cluster that mediates the biosynthesis of the diterpene methyl phomopsenonate. At first, the universal precursor of diterpene, geranylgeranyl diphosphate (GGPP) is provided and is cyclized by the unusual bifunctional terpene synthase PaPS to give phomopsene. The C-terminal prenyltransferase domain of PaPS catalyzes formation of GGPP, whereas the N-terminal terpene cyclase domain catalyzes the cyclization of GGPP to phomopsene. Since the oxidation of a methylgroup to a carboxyl group is frequently catalyzed by a cytochrome P450 monooxygenase, the C-16 methyl group would be oxidized by the cluster-specific cytochrome P450 monooxygenase ORF3. Subsequently, oxidation of the allylic position and methylation of the carboxyl group may give methyl phomopsenonate. Although further study is necessary to identify genes such as a monooxygenase and a methyltransferase, the predicted functions of genes on the cluster are correlated with the structure of methyl phomopsenonate. This is Phomopsene synthase from Phomopsis amygdali (Fusicoccum amygdali).